The primary structure comprises 655 residues: Kelch-like protein 13 (655 aa).

The BTB domain occupies 92 to 161; that stretch reads CDVTLMPGDT…IYTAKLSLNM (70 aa). Positions 196 to 297 constitute a BACK domain; sequence CVEVGRIANT…TPQELINYVQ (102 aa). Kelch repeat units lie at residues 341–389, 390–441, 442–488, 490–535, 537–587, and 588–636; these read HLVT…VIGN, FLYV…ALKG, YLYA…VYGG, MYIS…TVGE, LYVI…VFEN, and KIYV…TLTV.

As to quaternary structure, component of the BCR(KLHL9-KLHL13) E3 ubiquitin ligase complex, at least composed of CUL3, KLHL9, KLHL13 and RBX1. Interacts with AURKB.

The protein operates within protein modification; protein ubiquitination. In terms of biological role, substrate-specific adapter of a BCR (BTB-CUL3-RBX1) E3 ubiquitin-protein ligase complex required for mitotic progression and cytokinesis. The BCR(KLHL9-KLHL13) E3 ubiquitin ligase complex mediates the ubiquitination of AURKB and controls the dynamic behavior of AURKB on mitotic chromosomes and thereby coordinates faithful mitotic progression and completion of cytokinesis. This chain is Kelch-like protein 13 (KLHL13), found in Bos taurus (Bovine).